We begin with the raw amino-acid sequence, 492 residues long: Histone-lysine N-methyltransferase SUVR4 (492 aa).

Residues 112–138 (ETRSASSGSSIQVVQKQPQLSNGDRKR) form a disordered region. Polar residues predominate over residues 113 to 133 (TRSASSGSSIQVVQKQPQLSN). 9 residues coordinate Zn(2+): C196, C197, C200, C204, C213, C281, C285, C287, and C291. The 104-residue stretch at 196–299 (CCANCKGNCL…QCGNRVVQRG (104 aa)) folds into the Pre-SET domain. An SET domain is found at 302–435 (CQLQVYFTQE…AMDELTWDYM (134 aa)). S-adenosyl-L-methionine contacts are provided by residues 313–315 (KGW) and 391–392 (NH). A Zn(2+)-binding site is contributed by C394. S-adenosyl-L-methionine is bound at residue Y434. The region spanning 446 to 462 (KAFRCCCGSESCRDRKI) is the Post-SET domain. C450, C452, and C457 together coordinate Zn(2+). The disordered stretch occupies residues 463–492 (KGSQGKSIERRKIVSAKKQQGSKEVSKKRK).

The protein belongs to the class V-like SAM-binding methyltransferase superfamily. Histone-lysine methyltransferase family. Interacts with ubiquitin.

It localises to the nucleus. The protein resides in the chromosome. It catalyses the reaction N(6)-methyl-L-lysyl(9)-[histone H3] + S-adenosyl-L-methionine = N(6),N(6)-dimethyl-L-lysyl(9)-[histone H3] + S-adenosyl-L-homocysteine + H(+). The enzyme catalyses N(6),N(6)-dimethyl-L-lysyl(9)-[histone H3] + S-adenosyl-L-methionine = N(6),N(6),N(6)-trimethyl-L-lysyl(9)-[histone H3] + S-adenosyl-L-homocysteine + H(+). Its function is as follows. Histone methyltransferase that converts monomethylated 'Lys-9' of histone H3 (H3K9me1) to dimethylated 'Lys-9' (H3K9me2) in the absence of bound ubiquitin, and to trimethylated 'Lys-9' (H3K9me3) in the presence of bound ubiquitin. Acts in a locus-specific manner and contributes to the transcriptional silencing of pseudogenes and transposons. H3 'Lys-9' methylation represents a specific tag for epigenetic transcriptional repression. The sequence is that of Histone-lysine N-methyltransferase SUVR4 (SUVR4) from Arabidopsis thaliana (Mouse-ear cress).